A 298-amino-acid polypeptide reads, in one-letter code: HTH-type transcriptional regulator ArgP (298 aa).

In terms of domain architecture, HTH lysR-type spans 4–60 (LDYRWIEALDSVVSKGSFERAAEQLFISQSAVSQRIKQLEKYLAQPVLIREQPPRPT). The H-T-H motif DNA-binding region spans 21-40 (FERAAEQLFISQSAVSQRIK).

The protein belongs to the LysR transcriptional regulatory family. In terms of assembly, homodimer.

Controls the transcription of genes involved in arginine and lysine metabolism. This chain is HTH-type transcriptional regulator ArgP, found in Vibrio cholerae serotype O1 (strain ATCC 39541 / Classical Ogawa 395 / O395).